Consider the following 520-residue polypeptide: Cytochrome P450 4F3 (520 aa).

A helical transmembrane segment spans residues Leu-11–Leu-31. 2 residues coordinate heme: Glu-328 and Cys-468.

This sequence belongs to the cytochrome P450 family. Requires heme as cofactor. In terms of tissue distribution, selectively expressed in blood neutrophils and bone marrow cells. Coexpressed with CYP4F3B in prostate, ileum and trachea. As to expression, selectively expressed in liver and kidney. It is also the predominant CYP4F isoform in trachea and tissues of the gastrointestinal tract.

The protein localises to the endoplasmic reticulum membrane. It localises to the microsome membrane. It catalyses the reaction an organic molecule + reduced [NADPH--hemoprotein reductase] + O2 = an alcohol + oxidized [NADPH--hemoprotein reductase] + H2O + H(+). The catalysed reaction is leukotriene B4 + reduced [NADPH--hemoprotein reductase] + O2 = 20-hydroxy-leukotriene B4 + oxidized [NADPH--hemoprotein reductase] + H2O + H(+). The enzyme catalyses 20-hydroxy-leukotriene B4 + reduced [NADPH--hemoprotein reductase] + O2 = 20-oxo-leukotriene B4 + oxidized [NADPH--hemoprotein reductase] + 2 H2O + H(+). It carries out the reaction 20-oxo-leukotriene B4 + reduced [NADPH--hemoprotein reductase] + O2 = 20-carboxy-leukotriene B4 + oxidized [NADPH--hemoprotein reductase] + H2O + 2 H(+). It catalyses the reaction (5Z,8Z,11Z)-eicosatrienoate + reduced [NADPH--hemoprotein reductase] + O2 = 20-hydroxy-(5Z,8Z,11Z)-eicosatrienoate + oxidized [NADPH--hemoprotein reductase] + H2O + H(+). The catalysed reaction is (5Z,8Z,11Z,14Z)-eicosatetraenoate + reduced [NADPH--hemoprotein reductase] + O2 = 20-hydroxy-(5Z,8Z,11Z,14Z)-eicosatetraenoate + oxidized [NADPH--hemoprotein reductase] + H2O + H(+). The enzyme catalyses (5Z,8Z,11Z,14Z,17Z)-eicosapentaenoate + reduced [NADPH--hemoprotein reductase] + O2 = 19-hydroxy-(5Z,8Z,11Z,14Z,17Z)-eicosapentaenoate + oxidized [NADPH--hemoprotein reductase] + H2O + H(+). It carries out the reaction (5Z,8Z,11Z,14Z,17Z)-eicosapentaenoate + reduced [NADPH--hemoprotein reductase] + O2 = 20-hydroxy-(5Z,8Z,11Z,14Z,17Z)-eicosapentaenoate + oxidized [NADPH--hemoprotein reductase] + H2O + H(+). It catalyses the reaction (4Z,7Z,10Z,13Z,16Z,19Z)-docosahexaenoate + reduced [NADPH--hemoprotein reductase] + O2 = 21-hydroxy-(4Z,7Z,10Z,13Z,16Z,19Z)-docosahexaenoate + oxidized [NADPH--hemoprotein reductase] + H2O + H(+). The catalysed reaction is (4Z,7Z,10Z,13Z,16Z,19Z)-docosahexaenoate + reduced [NADPH--hemoprotein reductase] + O2 = 22-hydroxy-(4Z,7Z,10Z,13Z,16Z,19Z)-docosahexaenoate + oxidized [NADPH--hemoprotein reductase] + H2O + H(+). The enzyme catalyses 8,9-epoxy-(5Z,11Z,14Z)-eicosatrienoate + reduced [NADPH--hemoprotein reductase] + O2 = 20-hydroxy-8,9-epoxy-(5Z,11Z,14Z)-eicosatrienoate + oxidized [NADPH--hemoprotein reductase] + H2O + H(+). It carries out the reaction 11,12-epoxy-(5Z,8Z,14Z)-eicosatrienoate + reduced [NADPH--hemoprotein reductase] + O2 = 20-hydroxy-11,12-epoxy-(5Z,8Z,14Z)-eicosatrienoate + oxidized [NADPH--hemoprotein reductase] + H2O + H(+). It catalyses the reaction 14,15-epoxy-(5Z,8Z,11Z)-eicosatrienoate + reduced [NADPH--hemoprotein reductase] + O2 = 20-hydroxy-14,15-epoxy-(5Z,8Z,11Z)-eicosatrienoate + oxidized [NADPH--hemoprotein reductase] + H2O + H(+). The catalysed reaction is 12,13-epoxy-(9Z)-octadecenoate + reduced [NADPH--hemoprotein reductase] + O2 = 18-hydroxy-12,13-epoxy-(9Z)-octadecenoate + oxidized [NADPH--hemoprotein reductase] + H2O + H(+). The enzyme catalyses 9,10-epoxy-(12Z)-octadecenoate + reduced [NADPH--hemoprotein reductase] + O2 = 18-hydroxy-9,10-epoxy-(12Z)-octadecenoate + oxidized [NADPH--hemoprotein reductase] + H2O + H(+). It carries out the reaction 9,10-epoxyoctadecanoate + reduced [NADPH--hemoprotein reductase] + O2 = 18-hydroxy-9,10-epoxy-octadecanoate + oxidized [NADPH--hemoprotein reductase] + H2O + H(+). It catalyses the reaction (12R)-hydroxy-(9Z)-octadecenoate + reduced [NADPH--hemoprotein reductase] + O2 = (12R),18-dihydroxy-(9Z)-octadecenoate + oxidized [NADPH--hemoprotein reductase] + H2O + H(+). The catalysed reaction is 12-hydroxyoctadecanoate + reduced [NADPH--hemoprotein reductase] + O2 = 12,18-dihydroxyoctadecanoate + oxidized [NADPH--hemoprotein reductase] + H2O + H(+). The enzyme catalyses 5-hydroxy-(6E,8Z,11Z,14Z)-eicosatetraenoate + reduced [NADPH--hemoprotein reductase] + O2 = 5,20-dihydroxy-(6E,8Z,11Z,14Z)-eicosatetraenoate + oxidized [NADPH--hemoprotein reductase] + H2O + H(+). It carries out the reaction 8-hydroxy-(5Z,9E,11Z,14Z)-eicosatetraenoate + reduced [NADPH--hemoprotein reductase] + O2 = 8,20-dihydroxy-(5Z,9E,11Z,14Z)-eicosatetraenoate + oxidized [NADPH--hemoprotein reductase] + H2O + H(+). It catalyses the reaction 12-hydroxy-(5Z,8Z,10E,14Z)-eicosatetraenoate + reduced [NADPH--hemoprotein reductase] + O2 = 12,20-dihydroxy-(5Z,8Z,10E,14Z)-eicosatetraenoate + oxidized [NADPH--hemoprotein reductase] + H2O + H(+). The catalysed reaction is 5-hydroxy-(6E,8Z,11Z,14Z,17Z)-eicosapentaenoate + reduced [NADPH--hemoprotein reductase] + O2 = 5,20-dihydroxy-(6E,8Z,11Z,14Z,17Z)-eicosapentaenoate + oxidized [NADPH--hemoprotein reductase] + H2O + H(+). The enzyme catalyses lipoxin A4 + reduced [NADPH--hemoprotein reductase] + O2 = 20-hydroxy-lipoxin A4 + oxidized [NADPH--hemoprotein reductase] + H2O + H(+). It carries out the reaction lipoxin B4 + reduced [NADPH--hemoprotein reductase] + O2 = 20-hydroxy-lipoxin B4 + oxidized [NADPH--hemoprotein reductase] + H2O + H(+). It catalyses the reaction 22-hydroxydocosanoate + reduced [NADPH--hemoprotein reductase] + O2 = 22-oxodocosanoate + oxidized [NADPH--hemoprotein reductase] + 2 H2O + H(+). The catalysed reaction is 22-oxodocosanoate + reduced [NADPH--hemoprotein reductase] + O2 = docosanedioate + oxidized [NADPH--hemoprotein reductase] + H2O + 2 H(+). The enzyme catalyses docosanoate + reduced [NADPH--hemoprotein reductase] + O2 = 22-hydroxydocosanoate + oxidized [NADPH--hemoprotein reductase] + H2O + H(+). It carries out the reaction tetracosanoate + reduced [NADPH--hemoprotein reductase] + O2 = 24-hydroxytetracosanoate + oxidized [NADPH--hemoprotein reductase] + H2O + H(+). It catalyses the reaction hexacosanoate + reduced [NADPH--hemoprotein reductase] + O2 = 26-hydroxyhexacosanoate + oxidized [NADPH--hemoprotein reductase] + H2O + H(+). The catalysed reaction is 26-hydroxyhexacosanoate + reduced [NADPH--hemoprotein reductase] + O2 = 26-oxohexacosanoate + oxidized [NADPH--hemoprotein reductase] + 2 H2O + H(+). The enzyme catalyses 26-oxohexacosanoate + reduced [NADPH--hemoprotein reductase] + O2 = hexacosanedioate + oxidized [NADPH--hemoprotein reductase] + H2O + 2 H(+). It carries out the reaction 3-hydroxyoctadecanoate + reduced [NADPH--hemoprotein reductase] + O2 = 3,18-dihydroxyoctadecanoate + oxidized [NADPH--hemoprotein reductase] + H2O + H(+). It catalyses the reaction 3-hydroxyhexadecanoate + reduced [NADPH--hemoprotein reductase] + O2 = 3,16-dihydroxyhexadecanoate + oxidized [NADPH--hemoprotein reductase] + H2O + H(+). It functions in the pathway lipid metabolism; leukotriene B4 degradation. It participates in lipid metabolism; arachidonate metabolism. With respect to regulation, inhibited by carbon monoxide (CO). Its function is as follows. A cytochrome P450 monooxygenase involved in the metabolism of various endogenous substrates, including fatty acids and their oxygenated derivatives (oxylipins). Mechanistically, uses molecular oxygen inserting one oxygen atom into a substrate, and reducing the second into a water molecule, with two electrons provided by NADPH via cytochrome P450 reductase (CPR; NADPH-ferrihemoprotein reductase). May play a role in inactivation of pro-inflammatory and anti-inflammatory oxylipins during the resolution of inflammation. In terms of biological role, catalyzes predominantly the oxidation of the terminal carbon (omega-oxidation) of oxylipins in myeloid cells, displaying higher affinity for arachidonate metabolite leukotriene B4 (LTB4). Inactivates LTB4 via three successive oxidative transformations to 20-hydroxy-LTB4, then to 20-oxo-LTB4 and to 20-carboxy-LTB4. Has omega-hydroxylase activity toward long-chain fatty acid epoxides with preference for 8,9-epoxy-(5Z,11Z,14Z)-eicosatrienoate (EET) and 9,10-epoxyoctadecanoate. Omega-hydroxylates monohydroxy polyunsaturated fatty acids (PUFAs), including hydroxyeicosatetraenoates (HETEs) and hydroxyeicosapentaenoates (HEPEs), to dihydroxy compounds. Contributes to the degradation of saturated very long-chain fatty acids (VLCFAs) such as docosanoic acid, by catalyzing successive omega-oxidations to the corresponding dicarboxylic acid, thereby initiating chain shortening. Has low hydroxylase activity toward PUFAs. Functionally, catalyzes predominantly the oxidation of the terminal carbon (omega-oxidation) of polyunsaturated fatty acids (PUFAs). Participates in the conversion of arachidonic acid to 20-hydroxyeicosatetraenoic acid (20-HETE), a signaling molecule acting both as vasoconstrictive and natriuretic with overall effect on arterial blood pressure. Has high omega-hydroxylase activity toward other PUFAs, including eicosatrienoic acid (ETA), eicosapentaenoic acid (EPA) and docosahexaenoic acid (DHA). Can also catalyze the oxidation of the penultimate carbon (omega-1 oxidation) of PUFAs with lower efficiency. Contributes to the degradation of saturated very long-chain fatty acids (VLCFAs) such as docosanoic acid and hexacosanoic acid, by catalyzing successive omega-oxidations to the corresponding dicarboxylic acids, thereby initiating chain shortening. Omega-hydroxylates long-chain 3-hydroxy fatty acids, likely initiating the oxidative conversion to the corresponding 3-hydroxydicarboxylic fatty acids. Has omega-hydroxylase activity toward long-chain fatty acid epoxides with preference for 8,9-epoxy-(5Z,11Z,14Z)-eicosatrienoate (EET) and 9,10-epoxyoctadecanoate. This chain is Cytochrome P450 4F3, found in Homo sapiens (Human).